Reading from the N-terminus, the 842-residue chain is Glucans biosynthesis glucosyltransferase H (842 aa).

Transmembrane regions (helical) follow at residues 140 to 160, 194 to 214, 513 to 533, 568 to 588, 615 to 635, 656 to 676, and 680 to 700; these read ILLL…KTIL, ILIL…TALM, VFLT…FLAL, IALF…SIIL, VLLA…AFLG, FMRH…MAWL, and FLFW…VSAI.

This sequence belongs to the glycosyltransferase 2 family. OpgH subfamily.

Its subcellular location is the cell inner membrane. The protein operates within glycan metabolism; osmoregulated periplasmic glucan (OPG) biosynthesis. Its function is as follows. Involved in the biosynthesis of osmoregulated periplasmic glucans (OPGs). This chain is Glucans biosynthesis glucosyltransferase H, found in Klebsiella pneumoniae subsp. pneumoniae (strain ATCC 700721 / MGH 78578).